We begin with the raw amino-acid sequence, 466 residues long: Cysteine--tRNA ligase (466 aa).

Residue Cys-28 participates in Zn(2+) binding. The 'HIGH' region motif lies at 30 to 40 (PTVYNFFHIGN). Residues Cys-208, His-233, and Glu-237 each contribute to the Zn(2+) site. The short motif at 265–269 (KMSKS) is the 'KMSKS' region element. Lys-268 contacts ATP.

It belongs to the class-I aminoacyl-tRNA synthetase family. As to quaternary structure, monomer. The cofactor is Zn(2+).

Its subcellular location is the cytoplasm. The enzyme catalyses tRNA(Cys) + L-cysteine + ATP = L-cysteinyl-tRNA(Cys) + AMP + diphosphate. The polypeptide is Cysteine--tRNA ligase (Clostridium perfringens (strain 13 / Type A)).